Reading from the N-terminus, the 55-residue chain is Large ribosomal subunit protein bL33 (55 aa).

It belongs to the bacterial ribosomal protein bL33 family.

This Deinococcus geothermalis (strain DSM 11300 / CIP 105573 / AG-3a) protein is Large ribosomal subunit protein bL33.